The primary structure comprises 258 residues: Short-chain dehydrogenase/reductase aba4 (258 aa).

NADP(+) is bound by residues Ile20, Asp66, and Lys130. Catalysis depends on proton donor residues Ser146 and Tyr160. NADP(+)-binding residues include Tyr160, Lys164, Ile193, and Thr195. Residue Lys164 is the Lowers pKa of active site Tyr of the active site.

It belongs to the short-chain dehydrogenases/reductases (SDR) family.

Its pathway is hormone biosynthesis. Its function is as follows. Short-chain dehydrogenase/reductase; part of the gene cluster that mediates the biosynthesis of abscisic acid (ABA), a phytohormone that acts antagonistically toward salicylic acid (SA), jasmonic acid (JA) and ethylene (ETH) signaling, to impede plant defense responses. The first step of the pathway catalyzes the reaction from farnesyl diphosphate to alpha-ionylideneethane performed by the alpha-ionylideneethane synthase aba3 via a three-step reaction mechanism involving 2 neutral intermediates, beta-farnesene and allofarnesene. The cytochrome P450 monooxygenase aba1 might then be involved in the conversion of alpha-ionylideneethane to alpha-ionylideneacetic acid. Alpha-ionylideneacetic acid is further converted to abscisic acid in 2 steps involving the cytochrome P450 monooxygenase aba2 and the short-chain dehydrogenase/reductase aba4, via the intermediates 1'-deoxy-ABA or 1',4'-trans-diol-ABA, depending on the order of action of these 2 enzymes. Aba2 is responsible for the hydroxylation of carbon atom C-1' and aba4 might be involved in the oxidation of the C-4' carbon atom. This is Short-chain dehydrogenase/reductase aba4 from Botryotinia fuckeliana (Noble rot fungus).